Here is a 117-residue protein sequence, read N- to C-terminus: UPF0122 protein Teth39_1278 (117 aa).

The protein belongs to the UPF0122 family.

In terms of biological role, might take part in the signal recognition particle (SRP) pathway. This is inferred from the conservation of its genetic proximity to ftsY/ffh. May be a regulatory protein. This is UPF0122 protein Teth39_1278 from Thermoanaerobacter pseudethanolicus (strain ATCC 33223 / 39E) (Clostridium thermohydrosulfuricum).